Consider the following 192-residue polypeptide: Anthranilate synthase component 2 (192 aa).

In terms of domain architecture, Glutamine amidotransferase type-1 spans Asp-3–Ala-192. Gly-57–Gly-59 serves as a coordination point for L-glutamine. The active-site Nucleophile; for GATase activity is Cys-84. Residues Gln-88 and Ser-134 to Leu-135 each bind L-glutamine. Catalysis depends on for GATase activity residues His-170 and Glu-172.

As to quaternary structure, heterotetramer consisting of two non-identical subunits: a beta subunit (TrpG) and a large alpha subunit (TrpE).

It carries out the reaction chorismate + L-glutamine = anthranilate + pyruvate + L-glutamate + H(+). It functions in the pathway amino-acid biosynthesis; L-tryptophan biosynthesis; L-tryptophan from chorismate: step 1/5. Functionally, part of a heterotetrameric complex that catalyzes the two-step biosynthesis of anthranilate, an intermediate in the biosynthesis of L-tryptophan. In the first step, the glutamine-binding beta subunit (TrpG) of anthranilate synthase (AS) provides the glutamine amidotransferase activity which generates ammonia as a substrate that, along with chorismate, is used in the second step, catalyzed by the large alpha subunit of AS (TrpE) to produce anthranilate. In the absence of TrpG, TrpE can synthesize anthranilate directly from chorismate and high concentrations of ammonia. This chain is Anthranilate synthase component 2 (trpG), found in Yersinia pestis.